Here is a 378-residue protein sequence, read N- to C-terminus: 3-dehydroquinate synthase (378 aa).

NAD(+) is bound by residues 115 to 119 (GVVGD), 139 to 140 (TS), Lys152, and Lys161. Residues Glu194, His256, and His275 each coordinate Zn(2+).

This sequence belongs to the sugar phosphate cyclases superfamily. Dehydroquinate synthase family. It depends on Co(2+) as a cofactor. Requires Zn(2+) as cofactor. The cofactor is NAD(+).

It is found in the cytoplasm. The catalysed reaction is 7-phospho-2-dehydro-3-deoxy-D-arabino-heptonate = 3-dehydroquinate + phosphate. It participates in metabolic intermediate biosynthesis; chorismate biosynthesis; chorismate from D-erythrose 4-phosphate and phosphoenolpyruvate: step 2/7. Functionally, catalyzes the conversion of 3-deoxy-D-arabino-heptulosonate 7-phosphate (DAHP) to dehydroquinate (DHQ). In Brucella suis (strain ATCC 23445 / NCTC 10510), this protein is 3-dehydroquinate synthase.